The primary structure comprises 238 residues: MLCCMRRTKQVEKNDEDQKIEQDGIKPEDKAHKAATKIQASFRGHITRKKLKGEKKDDAQAAEAEANKKDEAPVADGVEKKGEGTTATEAAPATGSKPDEPGKAGETPSEEKKGEGDAATEQAAPQAPASSEEKAGSAETESATKASTDNSPSSKAEDAPAKEEPKQADVPAAVTAAAATTPAAEDAAAKATAQPPTETGESSQAEENIEAVDETKPKESARQDEGKEEEPEADQEHA.

The tract at residues 1–238 is disordered; that stretch reads MLCCMRRTKQ…EEPEADQEHA (238 aa). 2 S-palmitoyl cysteine lipidation sites follow: Cys3 and Cys4. Residues 9-32 show a composition bias toward basic and acidic residues; that stretch reads KQVEKNDEDQKIEQDGIKPEDKAH. One can recognise an IQ domain in the interval 31 to 60; the sequence is AHKAATKIQASFRGHITRKKLKGEKKDDAQ. Position 41 is a phosphoserine; by PHK and PKC (Ser41). Positions 54–83 are enriched in basic and acidic residues; sequence EKKDDAQAAEAEANKKDEAPVADGVEKKGE. Over residues 84–95 the composition is skewed to low complexity; it reads GTTATEAAPATG. Positions 97–116 are enriched in basic and acidic residues; that stretch reads KPDEPGKAGETPSEEKKGEG. Residues 119–130 are compositionally biased toward low complexity; sequence ATEQAAPQAPAS. Polar residues predominate over residues 139–154; the sequence is ETESATKASTDNSPSS. A phosphoserine mark is found at Ser151, Ser153, and Ser154. Positions 155 to 167 are enriched in basic and acidic residues; it reads KAEDAPAKEEPKQ. The segment covering 168–199 has biased composition (low complexity); sequence ADVPAAVTAAAATTPAAEDAAAKATAQPPTET. The residue at position 181 (Thr181) is a Phosphothreonine. Phosphoserine; by CK2 is present on residues Ser202 and Ser203. Residues 213–225 are compositionally biased toward basic and acidic residues; it reads DETKPKESARQDE. The segment covering 226–238 has biased composition (acidic residues); the sequence is GKEEEPEADQEHA.

This sequence belongs to the neuromodulin family. As to quaternary structure, identified in a complex containing FGFR4, NCAM1, CDH2, PLCG1, FRS2, SRC, SHC1, GAP43 and CTTN. Interacts (via IQ domain) with calmodulin. Binds calmodulin with a greater affinity in the absence of Ca(2+) than in its presence. Phosphorylated. Phosphorylation of this protein by a protein kinase C is specifically correlated with certain forms of synaptic plasticity. Post-translationally, palmitoylated by ZDHHC3. Palmitoylation is regulated by ARF6 and is essential for plasma membrane association and axonal and dendritic filopodia induction. Deacylated by LYPLA2.

Its subcellular location is the cell membrane. The protein localises to the cell projection. It is found in the growth cone membrane. It localises to the synapse. The protein resides in the filopodium membrane. Its subcellular location is the perikaryon. The protein localises to the dendrite. It is found in the axon. It localises to the cytoplasm. In terms of biological role, this protein is associated with nerve growth. It is a major component of the motile 'growth cones' that form the tips of elongating axons. Plays a role in axonal and dendritic filopodia induction. This Macaca fascicularis (Crab-eating macaque) protein is Neuromodulin (GAP43).